Here is a 624-residue protein sequence, read N- to C-terminus: Double-stranded RNA-binding protein Staufen homolog 2 (624 aa).

DRBM domains follow at residues 55-122, 142-228, 254-321, 354-422, and 540-604; these read STSI…NGLA, QRAN…SEIS, MKSF…PEYG, RRRE…IADQ, and LTCL…EKAD. Residues 197 to 223 form a disordered region; the sequence is LRNEPIPERSSLNGEANRGPEEDKDAN. Residues 214–223 are compositionally biased toward basic and acidic residues; it reads RGPEEDKDAN. Disordered stretches follow at residues 401-428 and 592-624; these read EKTGKRGENPDWDEQNSGIADQTSTPKG and PFEQAKLRGEKADNKQANSGTIAQDCKDSKAVV. Residues 415 to 426 are compositionally biased toward polar residues; the sequence is QNSGIADQTSTP. A compositionally biased stretch (basic and acidic residues) spans 596–605; that stretch reads AKLRGEKADN.

Functionally, RNA-binding protein required for the microtubule-dependent transport of RNAs within polarized cell types. This is Double-stranded RNA-binding protein Staufen homolog 2 (stau2) from Xenopus tropicalis (Western clawed frog).